A 155-amino-acid polypeptide reads, in one-letter code: Lectin-like protein EP153R (155 aa).

Over 1-30 (MYFKKKYIGLIDKNCEKKILDDCTTIKICY) the chain is Cytoplasmic. Residues 31–51 (ILIGILIGTNMITLIYNFIFW) form a helical membrane-spanning segment. Residues 52–155 (DHYMTCNKKD…YLPLLFICSK (104 aa)) lie on the Extracellular side of the membrane. A disulfide bridge links Cys-66 with Cys-77. The tract at residues 66–154 (CPKDWVGYNN…KYLPLLFICS (89 aa)) is lectin-like. N-linked (GlcNAc...) asparagine; by host glycosylation is found at Asn-82, Asn-86, Asn-98, Asn-104, Asn-110, Asn-124, Asn-130, and Asn-137. Cys-94 and Cys-153 are disulfide-bonded.

This sequence belongs to the asfivirus lectin-like protein family. In terms of assembly, homodimer.

It is found in the host endoplasmic reticulum membrane. Down-regulates MHC-I expression by impairing the appropriate configuration or presentation into the plasma membrane of the latter. Participates in viral hemadsorption, which may help viral spread. Reduces the transactivating activity of host TP53, thus inhibiting apoptosis. Non-essential for virus growth in swine macrophage cell cultures. In Ornithodoros (relapsing fever ticks), this protein is Lectin-like protein EP153R.